A 92-amino-acid chain; its full sequence is Small ribosomal subunit protein bS20 (92 aa).

A disordered region spans residues 1–25; sequence MANSAQARKRARQAAKANSHNSALR.

This sequence belongs to the bacterial ribosomal protein bS20 family.

Binds directly to 16S ribosomal RNA. The sequence is that of Small ribosomal subunit protein bS20 from Paraburkholderia phytofirmans (strain DSM 17436 / LMG 22146 / PsJN) (Burkholderia phytofirmans).